A 452-amino-acid polypeptide reads, in one-letter code: Alkane uptake protein A (452 aa).

The signal sequence occupies residues 1–36 (MSERSVYMVLSPRFSVRAVSLAVAAVSASLSMPTSA).

Belongs to the OmpP1/FadL family. In terms of assembly, interacts with the inner membrane protein AupB.

It is found in the cell outer membrane. In terms of biological role, required for growth on alkanes. Probably involved in the uptake of micelle-solubilized alkanes. In Marinobacter nauticus (strain ATCC 49840 / DSM 8798 / CIP 103578 / SP17) (Marinobacter hydrocarbonoclasticus), this protein is Alkane uptake protein A.